Here is a 309-residue protein sequence, read N- to C-terminus: UPF0276 protein RB0508 (309 aa).

It belongs to the UPF0276 family.

This chain is UPF0276 protein RB0508, found in Rhizobium meliloti (strain 1021) (Ensifer meliloti).